The primary structure comprises 379 residues: MSTTKRCYYETLEVDRSADDSSLKAAFRKLAMKWHPDRNPGDASSESRFKEINEAYEVLKDGDKRAAYDRYGHAAFEQGGAGGPGFGAGFASSFSDIFEDLFGMAGQRGGRGTGRERGADLRYNMEITLEDAFVGKTAQIEIPVSVTCESCSGTGAKAGTKPKTCSMCGGAGRVRQAQGFFTLERTCPGCQGRGQTIEDPCPACSGAGRIERERTLSVNIPQGVEDGTRIRLAGEGEAGLRGGPPGDLYIFLSLASHEFFQRDGADLHCRVPISMVAAALGGEIEVPTIDKGKSKVKVPSGTQSGRRFRIAAKGMPVLRSRQTGDMYVQVVVETPQNLTKRQQELLAEFEKLSSGATQPEAAGFFTKVKDFFGTRGAAS.

Residues 7–72 enclose the J domain; the sequence is CYYETLEVDR…DKRAAYDRYG (66 aa). The segment at 135–213 adopts a CR-type zinc-finger fold; the sequence is GKTAQIEIPV…CSGAGRIERE (79 aa). The Zn(2+) site is built by C148, C151, C165, C168, C187, C190, C201, and C204. CXXCXGXG motif repeat units lie at residues 148-155, 165-172, 187-194, and 201-208; these read CESCSGTG, CSMCGGAG, CPGCQGRG, and CPACSGAG.

It belongs to the DnaJ family. As to quaternary structure, homodimer. Zn(2+) serves as cofactor.

It is found in the cytoplasm. Participates actively in the response to hyperosmotic and heat shock by preventing the aggregation of stress-denatured proteins and by disaggregating proteins, also in an autonomous, DnaK-independent fashion. Unfolded proteins bind initially to DnaJ; upon interaction with the DnaJ-bound protein, DnaK hydrolyzes its bound ATP, resulting in the formation of a stable complex. GrpE releases ADP from DnaK; ATP binding to DnaK triggers the release of the substrate protein, thus completing the reaction cycle. Several rounds of ATP-dependent interactions between DnaJ, DnaK and GrpE are required for fully efficient folding. Also involved, together with DnaK and GrpE, in the DNA replication of plasmids through activation of initiation proteins. The protein is Chaperone protein DnaJ of Rhodopseudomonas palustris (strain BisB18).